The primary structure comprises 544 residues: Methionine--tRNA ligase (544 aa).

Positions 10 to 20 (PYANGSLHLGH) match the 'HIGH' region motif. Cys141, Cys144, Cys153, and Cys156 together coordinate Zn(2+). The 'KMSKS' region signature appears at 329 to 333 (KLSTS). Thr332 serves as a coordination point for ATP.

The protein belongs to the class-I aminoacyl-tRNA synthetase family. MetG type 1 subfamily. Monomer. Zn(2+) serves as cofactor.

The protein localises to the cytoplasm. It carries out the reaction tRNA(Met) + L-methionine + ATP = L-methionyl-tRNA(Met) + AMP + diphosphate. Its function is as follows. Is required not only for elongation of protein synthesis but also for the initiation of all mRNA translation through initiator tRNA(fMet) aminoacylation. The sequence is that of Methionine--tRNA ligase from Bacillus cereus (strain B4264).